A 176-amino-acid chain; its full sequence is PRL-1 phosphatase (176 aa).

The 154-residue stretch at 13-166 (APALIEYKGM…YKPKARLKHK (154 aa)) folds into the Tyrosine-protein phosphatase domain. The Phosphocysteine intermediate role is filled by Cys109. Cys173 is modified (cysteine methyl ester). Residue Cys173 is the site of S-farnesyl cysteine attachment. Residues 174–176 (SVQ) constitute a propeptide, removed in mature form.

Belongs to the protein-tyrosine phosphatase family. In terms of assembly, homotrimer. Interacts with uex, possibly at the plasma membrane. Expressed in the adult head (at protein level). Expressed in neurons in the antennal lobe and V-glomeruli (at protein level). Expressed in dorsocentral neurons (at protein level).

The protein localises to the cytoplasm. The protein resides in the cell membrane. Its subcellular location is the apicolateral cell membrane. It localises to the cell projection. It is found in the axon. The catalysed reaction is O-phospho-L-tyrosyl-[protein] + H2O = L-tyrosyl-[protein] + phosphate. Functionally, probable phosphatase. Inhibits growth possibly by negatively regulating Src64B-induced growth. Regulates central nervous system circuit formation and stabilization of synapse-dense terminal arbors. In dorsocentral neurons, regulates synaptogenesis in terminal arbors via modulation of the insulin receptor pathway, likely upstream of Akt1, and via reduction of PtdIns(4,5)P2 (Phosphatidylinositol 4,5-bisphosphate) levels. In the nervous system, plays a protective role together with uex in response to olfactory carbon dioxide stimulation. This Drosophila melanogaster (Fruit fly) protein is PRL-1 phosphatase.